A 156-amino-acid polypeptide reads, in one-letter code: Transcriptional repressor NrdR (156 aa).

A zinc finger spans residues 3–34 (CPFCHSDNDKVQDSRTAEAGYVVRRKRLCQTC). Positions 49 to 139 (VRVVKSDETR…VYRDFDDAKD (91 aa)) constitute an ATP-cone domain.

It belongs to the NrdR family. The cofactor is Zn(2+).

Its function is as follows. Negatively regulates transcription of bacterial ribonucleotide reductase nrd genes and operons by binding to NrdR-boxes. The sequence is that of Transcriptional repressor NrdR from Rhodopirellula baltica (strain DSM 10527 / NCIMB 13988 / SH1).